A 590-amino-acid polypeptide reads, in one-letter code: V-type ATP synthase alpha chain (590 aa).

232 to 239 contributes to the ATP binding site; that stretch reads GPFGSGKT.

It belongs to the ATPase alpha/beta chains family.

The catalysed reaction is ATP + H2O + 4 H(+)(in) = ADP + phosphate + 5 H(+)(out). Functionally, produces ATP from ADP in the presence of a proton gradient across the membrane. The V-type alpha chain is a catalytic subunit. This chain is V-type ATP synthase alpha chain, found in Thermoanaerobacter pseudethanolicus (strain ATCC 33223 / 39E) (Clostridium thermohydrosulfuricum).